The following is a 104-amino-acid chain: Large ribosomal subunit protein uL24 (104 aa).

The protein belongs to the universal ribosomal protein uL24 family. In terms of assembly, part of the 50S ribosomal subunit.

Its function is as follows. One of two assembly initiator proteins, it binds directly to the 5'-end of the 23S rRNA, where it nucleates assembly of the 50S subunit. Functionally, one of the proteins that surrounds the polypeptide exit tunnel on the outside of the subunit. This is Large ribosomal subunit protein uL24 from Proteus mirabilis (strain HI4320).